The following is a 359-amino-acid chain: 4-hydroxy-3-methylbut-2-en-1-yl diphosphate synthase (flavodoxin) (359 aa).

Cys-264, Cys-267, Cys-299, and Glu-306 together coordinate [4Fe-4S] cluster.

The protein belongs to the IspG family. [4Fe-4S] cluster is required as a cofactor.

It carries out the reaction (2E)-4-hydroxy-3-methylbut-2-enyl diphosphate + oxidized [flavodoxin] + H2O + 2 H(+) = 2-C-methyl-D-erythritol 2,4-cyclic diphosphate + reduced [flavodoxin]. It functions in the pathway isoprenoid biosynthesis; isopentenyl diphosphate biosynthesis via DXP pathway; isopentenyl diphosphate from 1-deoxy-D-xylulose 5-phosphate: step 5/6. In terms of biological role, converts 2C-methyl-D-erythritol 2,4-cyclodiphosphate (ME-2,4cPP) into 1-hydroxy-2-methyl-2-(E)-butenyl 4-diphosphate. This Helicobacter pylori (strain J99 / ATCC 700824) (Campylobacter pylori J99) protein is 4-hydroxy-3-methylbut-2-en-1-yl diphosphate synthase (flavodoxin).